The primary structure comprises 318 residues: Olfactory receptor 51E1 (318 aa).

At methionine 1–alanine 31 the chain is on the extracellular side. The N-linked (GlcNAc...) asparagine glycan is linked to asparagine 8. A helical membrane pass occupies residues phenylalanine 32 to valine 52. The Cytoplasmic portion of the chain corresponds to arginine 53 to glutamate 60. Residues proline 61–methionine 81 form a helical membrane-spanning segment. Residues proline 82–cysteine 100 lie on the Extracellular side of the membrane. An N-linked (GlcNAc...) asparagine glycan is attached at asparagine 91. Cysteine 100 and cysteine 182 are oxidised to a cystine. A helical membrane pass occupies residues leucine 101–phenylalanine 123. The Cytoplasmic portion of the chain corresponds to aspartate 124–threonine 145. The helical transmembrane segment at lysine 146–isoleucine 166 threads the bilayer. At lysine 167–asparagine 198 the chain is on the extracellular side. The chain crosses the membrane as a helical span at residues valine 199–phenylalanine 219. Residues serine 220–alanine 239 are Cytoplasmic-facing. The chain crosses the membrane as a helical span at residues phenylalanine 240–leucine 260. At serine 261–proline 275 the chain is on the extracellular side. The helical transmembrane segment at valine 276–valine 296 threads the bilayer. Residues lysine 297 to proline 318 are Cytoplasmic-facing.

Belongs to the G-protein coupled receptor 1 family. In terms of tissue distribution, highly expressed in prostate. Very low levels may be detected in some other tissues, such as placenta, skeletal muscle, heart, ovary and testis. Up-regulated in prostate cancers.

It is found in the cell membrane. Its function is as follows. Odorant receptor. The sequence is that of Olfactory receptor 51E1 (OR51E1) from Homo sapiens (Human).